The primary structure comprises 116 residues: Iron-sulfur cluster insertion protein ErpA (116 aa).

Iron-sulfur cluster-binding residues include cysteine 44, cysteine 108, and cysteine 110.

Belongs to the HesB/IscA family. As to quaternary structure, homodimer. Requires iron-sulfur cluster as cofactor.

In terms of biological role, required for insertion of 4Fe-4S clusters for at least IspG. The sequence is that of Iron-sulfur cluster insertion protein ErpA from Shewanella halifaxensis (strain HAW-EB4).